Here is a 493-residue protein sequence, read N- to C-terminus: Cytochrome P450 710A3 (493 aa).

The helical transmembrane segment at 5–25 (VSLFASLTPYLVSALLLFLLL) threads the bilayer. A heme-binding site is contributed by Cys435.

Belongs to the cytochrome P450 family. Heme serves as cofactor. As to expression, expressed in stems. Detected in primary root caps and immature petals.

It is found in the membrane. The enzyme catalyses 5-dehydroepisterol + NADPH + O2 + H(+) = ergosta-5,7,22,24(28)-tetraen-3beta-ol + NADP(+) + 2 H2O. Its function is as follows. Required to form the C-22 double bond in the sterol side chain. Possesses in vitro C-22 desaturase activity toward beta-sitosterol and produces stigmasterol. The protein is Cytochrome P450 710A3 of Arabidopsis thaliana (Mouse-ear cress).